The following is a 293-amino-acid chain: Forkhead box protein N5 (293 aa).

Positions 104–152 are disordered; sequence TSPPLQLQRQLSNDYSTVEDSEDEAPTSCSDVLTDDDDSYNPWQPKHKR. Residues 106–119 are compositionally biased toward polar residues; that stretch reads PPLQLQRQLSNDYS. Residues 176 to 273 constitute a DNA-binding region (fork-head); it reads RPPLNYCNLI…NEMHALSDDL (98 aa).

Its subcellular location is the nucleus. The protein is Forkhead box protein N5 of Xenopus tropicalis (Western clawed frog).